Consider the following 266-residue polypeptide: Vitamin B12-binding protein (266 aa).

Residues 1–22 (MAKQMFRALGALLLTLPVWLYA) form the signal peptide. The Fe/B12 periplasmic-binding domain occupies 25-266 (RVITLSPANT…QLCNALSQVN (242 aa)). Residues tyrosine 50 and 242-246 (DWFER) contribute to the cyanocob(III)alamin site. Cysteine 183 and cysteine 259 are oxidised to a cystine.

It belongs to the BtuF family. In terms of assembly, the complex is composed of two ATP-binding proteins (BtuD), two transmembrane proteins (BtuC) and a solute-binding protein (BtuF).

Its subcellular location is the periplasm. In terms of biological role, part of the ABC transporter complex BtuCDF involved in vitamin B12 import. Binds vitamin B12 and delivers it to the periplasmic surface of BtuC. This chain is Vitamin B12-binding protein, found in Salmonella typhi.